Consider the following 1037-residue polypeptide: Importin-8 (1037 aa).

One can recognise an Importin N-terminal domain in the interval 22 to 102 (AENELNQSYK…RDNIVEGIIR (81 aa)). Residues 886–895 (DRSKAEKADM) show a composition bias toward basic and acidic residues. The segment at 886–934 (DRSKAEKADMEENEEISSDEEETNVTAQAMQSNNGRGEDEEEEDDDWDE) is disordered. The segment covering 896 to 908 (EENEEISSDEEET) has biased composition (acidic residues). A phosphoserine mark is found at Ser902 and Ser903. The segment covering 909-920 (NVTAQAMQSNNG) has biased composition (polar residues). Residues 923–934 (EDEEEEDDDWDE) show a composition bias toward acidic residues.

This sequence belongs to the importin beta family. As to quaternary structure, forms a heterodimer with KPNB1. Interacts with SRP19. Interacts with RPL23A. Binds directly to nuclear pore complexes. Interacts with LRPPRC; the interaction occurs when LRPPRC is in its RNA-free form and promotes import of LRPPRC to the nucleus to allow for EIF4E-mediated export of mRNAS from the nucleus to the cytoplasm.

It is found in the cytoplasm. The protein resides in the nucleus. Involved in nuclear protein import, either by acting as autonomous nuclear transport receptor or as an adapter-like protein in association with the importin-beta subunit KPNB1. Acting autonomously, may serve as receptor for nuclear localization signals (NLS) and promote translocation of import substrates through the nuclear pore complex (NPC) by an energy requiring, Ran-dependent mechanism. At the nucleoplasmic side of the NPC, Ran binds to importin, the importin/substrate complex dissociates and importin is re-exported from the nucleus to the cytoplasm where GTP hydrolysis releases Ran. The directionality of nuclear import is thought to be conferred by an asymmetric distribution of the GTP- and GDP-bound forms of Ran between the cytoplasm and nucleus. In vitro mediates the nuclear import of the signal recognition particle protein SRP19. May also be involved in cytoplasm-to-nucleus shuttling of a broad spectrum of other cargos, including Argonaute-microRNAs complexes, the JUN protein, RELA/NF-kappa-B p65 subunit, the translation initiation factor EIF4E and a set of receptor-activated mothers against decapentaplegic homolog (SMAD) transcription factors that play a critical role downstream of the large family of transforming growth factor beta and bone morphogenetic protein (BMP) cytokines. The sequence is that of Importin-8 (IPO8) from Homo sapiens (Human).